The sequence spans 366 residues: Putative zinc metalloprotease slr1821 (366 aa).

A Zn(2+)-binding site is contributed by H20. E21 is an active-site residue. Residue H24 coordinates Zn(2+). The next 3 membrane-spanning stretches (helical) occupy residues 95 to 115 (AIVISAGVIANLVFAYFLLIG), 293 to 313 (AVINILPLPALDGGQLVFLLI), and 325 to 345 (FQMGVMQTGLVLLLSLGVFLI). The region spanning 106-188 (LVFAYFLLIG…VPITVEVQRG (83 aa)) is the PDZ domain.

It belongs to the peptidase M50B family. The cofactor is Zn(2+).

It is found in the cell inner membrane. The chain is Putative zinc metalloprotease slr1821 from Synechocystis sp. (strain ATCC 27184 / PCC 6803 / Kazusa).